Here is a 289-residue protein sequence, read N- to C-terminus: MRFDEAYSGKVFIMSRSNYEKSKAVIFGMPMDWTVSFRPSSRFGPNRIREASLGLEEYSPYMDKHLEEVAYFDAGDMLLPFGNPQRSLEMIESYVDKLLADQKMPIGLGGEHLVSWPIFKAMHKIYPDMAIIHIDAHADLREEYEGEPLSHSTPIRKACSLIGPENVYSFGIRSGMREEFQYAKDSGMYMAKFEVATPLKEVLPKLAGRNVYVTIDIDVLDPAFAPGTGTAEAGGISSKELLEAIVAIAHSDVNVIGADLVEVAPAYDPSEKTPIAASKFVREMLLGWV.

Residues His112, Asp135, His137, Asp139, Asp216, and Asp218 each contribute to the Mn(2+) site.

Belongs to the arginase family. Agmatinase subfamily. Requires Mn(2+) as cofactor.

The enzyme catalyses agmatine + H2O = urea + putrescine. Its pathway is amine and polyamine biosynthesis; putrescine biosynthesis via agmatine pathway; putrescine from agmatine: step 1/1. Its function is as follows. Catalyzes the formation of putrescine from agmatine. The chain is Agmatinase (speB) from Halalkalibacterium halodurans (strain ATCC BAA-125 / DSM 18197 / FERM 7344 / JCM 9153 / C-125) (Bacillus halodurans).